A 251-amino-acid chain; its full sequence is tRNA (guanine-N(1)-)-methyltransferase (251 aa).

S-adenosyl-L-methionine-binding positions include G117 and 137 to 142 (IGDYVL).

Belongs to the RNA methyltransferase TrmD family. As to quaternary structure, homodimer.

It is found in the cytoplasm. The enzyme catalyses guanosine(37) in tRNA + S-adenosyl-L-methionine = N(1)-methylguanosine(37) in tRNA + S-adenosyl-L-homocysteine + H(+). Its function is as follows. Specifically methylates guanosine-37 in various tRNAs. This Actinobacillus pleuropneumoniae serotype 5b (strain L20) protein is tRNA (guanine-N(1)-)-methyltransferase.